A 765-amino-acid chain; its full sequence is MASALRQEGLTQEDYIEIQRRLGRDPNRAELGMFGVMWSEHCCYRNSRPLLRGFPTDGPRILVGPGENAGVVDLGEGHRLAFKIESHNHPSAVEPFQGAATGVGGILRDIFTMGARPIALLNALRFGPLDEPATQGLVEGVVAGISHYGNCVGVPTVGGEVAFDPAYRGNPLVNAMALGLMETDDIVKSGASGVGNPVVYVGSTTGRDGMGGASFASAELSADSLDDRPAVQVGDPFLEKGLIEACLEAFQSGDVVAAQDMGAAGLTCSCSEMAAKGNVGVELDLDRVPAREQGMTAYEFLLSESQERMLFVVQAGREEALMQRFRRWGLQAAVVGQVLEEPVVRVLQHGSVAAEVPARALAEDTPINQHTLISEPPEDIQEHWRWSETDLPSVSRDHDWGADLLALLDDPTIASKRWVYRQYDQQVLANTVVPAGGADAAVVRLRPQQGDASLRGANRGVAATVDCPNRWVALDPERGAMAAVAEAARNLSCVGAVPVAVTDNLNFPSPETPKGYWQLAMACRGLSEGCRVLGTPVTGGNVSLYNETRADDGSLQPIHPTPVVGMVGLVEDLGRVGGLAWRQAGDAVVLLGVSSDERQDDRVGLAGSSYQGVIHGLLTGRPPRVDLDLEQRVQALVRQAWEQGLLASAHDSSDGGLAVALAECSIASGLGVDGALPGDGVAPERRLFAEGGARIVVSVRAECMDAWTSLLADEAHAAVPVTILGAVADHGRFRLSLGSQPVLDQAVQTLTERFDQALPRRLGTA.

His41 is an active-site residue. 2 residues coordinate ATP: Tyr44 and Lys83. Glu85 contacts Mg(2+). Residues 86–89 (SHNH) and Arg108 each bind substrate. The active-site Proton acceptor is His87. Residue Asp109 coordinates Mg(2+). Gln232 contributes to the substrate binding site. Position 260 (Asp260) interacts with Mg(2+). A substrate-binding site is contributed by 304 to 306 (ESQ). ATP is bound by residues Asp503 and Gly540. Asn541 serves as a coordination point for Mg(2+). Ser543 is a substrate binding site.

This sequence belongs to the FGAMS family. As to quaternary structure, monomer. Part of the FGAM synthase complex composed of 1 PurL, 1 PurQ and 2 PurS subunits.

Its subcellular location is the cytoplasm. It catalyses the reaction N(2)-formyl-N(1)-(5-phospho-beta-D-ribosyl)glycinamide + L-glutamine + ATP + H2O = 2-formamido-N(1)-(5-O-phospho-beta-D-ribosyl)acetamidine + L-glutamate + ADP + phosphate + H(+). The protein operates within purine metabolism; IMP biosynthesis via de novo pathway; 5-amino-1-(5-phospho-D-ribosyl)imidazole from N(2)-formyl-N(1)-(5-phospho-D-ribosyl)glycinamide: step 1/2. In terms of biological role, part of the phosphoribosylformylglycinamidine synthase complex involved in the purines biosynthetic pathway. Catalyzes the ATP-dependent conversion of formylglycinamide ribonucleotide (FGAR) and glutamine to yield formylglycinamidine ribonucleotide (FGAM) and glutamate. The FGAM synthase complex is composed of three subunits. PurQ produces an ammonia molecule by converting glutamine to glutamate. PurL transfers the ammonia molecule to FGAR to form FGAM in an ATP-dependent manner. PurS interacts with PurQ and PurL and is thought to assist in the transfer of the ammonia molecule from PurQ to PurL. The sequence is that of Phosphoribosylformylglycinamidine synthase subunit PurL from Synechococcus sp. (strain WH7803).